Consider the following 183-residue polypeptide: Protein Syd (183 aa).

Belongs to the Syd family.

Its subcellular location is the cell inner membrane. Its function is as follows. Interacts with the SecY protein in vivo. May bind preferentially to an uncomplexed state of SecY, thus functioning either as a chelating agent for excess SecY in the cell or as a regulatory factor that negatively controls the translocase function. In Aliivibrio fischeri (strain MJ11) (Vibrio fischeri), this protein is Protein Syd.